Here is a 249-residue protein sequence, read N- to C-terminus: 1-(5-phosphoribosyl)-5-[(5-phosphoribosylamino)methylideneamino] imidazole-4-carboxamide isomerase (249 aa).

The active-site Proton acceptor is D8. The active-site Proton donor is the D130.

Belongs to the HisA/HisF family.

The protein localises to the cytoplasm. The enzyme catalyses 1-(5-phospho-beta-D-ribosyl)-5-[(5-phospho-beta-D-ribosylamino)methylideneamino]imidazole-4-carboxamide = 5-[(5-phospho-1-deoxy-D-ribulos-1-ylimino)methylamino]-1-(5-phospho-beta-D-ribosyl)imidazole-4-carboxamide. It participates in amino-acid biosynthesis; L-histidine biosynthesis; L-histidine from 5-phospho-alpha-D-ribose 1-diphosphate: step 4/9. The chain is 1-(5-phosphoribosyl)-5-[(5-phosphoribosylamino)methylideneamino] imidazole-4-carboxamide isomerase from Chromohalobacter salexigens (strain ATCC BAA-138 / DSM 3043 / CIP 106854 / NCIMB 13768 / 1H11).